The following is a 114-amino-acid chain: Large ribosomal subunit protein bL20c (114 aa).

It belongs to the bacterial ribosomal protein bL20 family.

The protein resides in the plastid. Binds directly to 23S ribosomal RNA and is necessary for the in vitro assembly process of the 50S ribosomal subunit. It is not involved in the protein synthesizing functions of that subunit. This chain is Large ribosomal subunit protein bL20c, found in Prototheca wickerhamii.